The chain runs to 1462 residues: Copper-transporting ATPase 2 (1462 aa).

Positions 1 to 23 (MDPRKNLASVGTMPEQERQVTAK) are disordered. Over 1 to 655 (MDPRKNLASV…KTEIKQWKKS (655 aa)) the chain is Cytoplasmic. 4 consecutive HMA domains span residues 68–134 (ATDV…FEAS), 153–219 (AVVK…FEAA), 267–333 (ATLP…PGHF), and 361–427 (RTAV…FEVS). Cu(+) contacts are provided by C79, C82, C164, C167, C278, and C281. The tract at residues 333 to 361 (FKVSLPDGVEENEPQSGSSQRHQEQGPGR) is disordered. Cu(+) is bound at residue C372. Residues 460 to 487 (KMAPDTRGLPTHQGPGHSSETPSSPGAT) are disordered. Residues 475-487 (GHSSETPSSPGAT) show a composition bias toward polar residues. A phosphoserine mark is found at S478 and S483. HMA domains follow at residues 490–556 (QKCF…FEAS) and 566–632 (GDIE…FHAS). Cu(+)-binding residues include C501, C504, C577, and C580. The helical transmembrane segment at 656 to 677 (FLCSLVFGIPVMGLMVYMLIPS) threads the bilayer. Over 678-699 (STPQETMVLDHNIIPGLSVLNL) the chain is Extracellular. Residues 700-719 (IFFILCTFVQFLGGWYFYVQ) form a helical membrane-spanning segment. Over 720–726 (AYKSLRH) the chain is Cytoplasmic. A helical membrane pass occupies residues 727 to 747 (RSANMDVLIVLATTIAYAYSL). Residues 748–766 (VILVVAVAEKAEKSPVTFF) lie on the Extracellular side of the membrane. A helical transmembrane segment spans residues 767–787 (DTPPMLFVFIALGRWLEHVAK). The Cytoplasmic segment spans residues 788 to 921 (SKTSEALAKL…KAPIQQLADR (134 aa)). Residues 922–944 (FSGYFVPFIIIISTLTLVVWIVI) traverse the membrane as a helical segment. Topologically, residues 945-974 (GFVDFGVVQKYFPSPSKHISQTEVIIRFAF) are extracellular. A helical membrane pass occupies residues 975-996 (QTSITVLCIACPCSLGLATPTA). Over 997-1319 (VMVGTGVAAQ…LSKRTVRRIR (323 aa)) the chain is Cytoplasmic. D1029 functions as the 4-aspartylphosphate intermediate in the catalytic mechanism. 2 residues coordinate Mg(2+): D1264 and D1268. A helical transmembrane segment spans residues 1320-1337 (VNLVLALIYNMVGIPIAA). The Extracellular segment spans residues 1338 to 1348 (GVFMPIGIVLQ). A helical transmembrane segment spans residues 1349-1368 (PWMGSAAMAASSVSVVLSSL). Over 1369 to 1462 (QLKCYRKPDL…LSDRDEEQCI (94 aa)) the chain is Cytoplasmic. S1395 and S1454 each carry phosphoserine.

It belongs to the cation transport ATPase (P-type) (TC 3.A.3) family. Type IB subfamily. As to quaternary structure, monomer. Interacts with COMMD1/MURR1. Interacts with DCTN4, in a copper-dependent manner. Interacts with ATOX1. Interacts (via C-terminus) with ZBTB16/PLZF. Detected in liver and kidney.

The protein resides in the golgi apparatus. Its subcellular location is the trans-Golgi network membrane. The protein localises to the late endosome. It catalyses the reaction Cu(+)(in) + ATP + H2O = Cu(+)(out) + ADP + phosphate + H(+). Its function is as follows. Copper ion transmembrane transporter involved in the export of copper out of the cells, such as the efflux of hepatic copper into the bile. The chain is Copper-transporting ATPase 2 (Atp7b) from Mus musculus (Mouse).